Consider the following 348-residue polypeptide: High mobility group protein 20A (348 aa).

Disordered stretches follow at residues 1–114 (MENL…YVRF) and 181–213 (SRKA…DTKE). Polar residues-rich tracts occupy residues 34–47 (SESS…QPVN) and 56–71 (SQVQ…TAEN). The segment covering 72–82 (TEQKPEEEQQR) has biased composition (basic and acidic residues). Residues 83 to 97 (TKRGGWAKGRKRKKP) are compositionally biased toward basic residues. Positions 104–172 (PKSPLTGYVR…RYMRELEQYQ (69 aa)) form a DNA-binding region, HMG box. The span at 183 to 213 (KAQDRQKGKLHRQDGARQPVHDHEKEADTKE) shows a compositional bias: basic and acidic residues. Positions 230 to 274 (SKAREAELRQLRKSNMEFEERNAALQKHVESMRTAVEKLEVDVIQ) form a coiled coil.

It localises to the nucleus. In terms of biological role, plays a role in neuronal differentiation. This chain is High mobility group protein 20A (HMG20A), found in Gallus gallus (Chicken).